A 109-amino-acid chain; its full sequence is MDEEESSEDNVDERVSSEELCGKEVKDTEAILGVDKLALLVASVLDVNDSTAESEVMEGAVLDVVLLAGTNSCERTLSGSVVNAMRIVLHIDRLEAELFFLVGLQLAIP.

This is an uncharacterized protein from Saccharomyces cerevisiae (strain ATCC 204508 / S288c) (Baker's yeast).